The chain runs to 312 residues: Aminoacyl tRNA synthase complex-interacting multifunctional protein 1 (312 aa).

M1 is modified (N-acetylmethionine). A2 is subject to N-acetylalanine. The tract at residues 6–46 (AVLKRLEQKGAEADQIIEYLKQQVSLLKEKAILQATLREEK) is required for fibroblast proliferation. The interval 54-194 (KLKKEIEELK…APRTVVSGLV (141 aa)) is interaction with HSP90B1. Residues 101 to 114 (AVTTVSSGTKEQIK) form a required for endothelial cell death region. Residues 107-147 (SGTKEQIKGGTGDEKKAKEKIEKKGEKKEKKQQSIAGSADS) form a disordered region. A compositionally biased stretch (basic and acidic residues) spans 111 to 138 (EQIKGGTGDEKKAKEKIEKKGEKKEKKQ). Residues 114-192 (KGGTGDEKKA…EIAPRTVVSG (79 aa)) form a required for endothelial cell migration region. Residue K137 forms a Glycyl lysine isopeptide (Lys-Gly) (interchain with G-Cter in SUMO1) linkage. Position 140 is a phosphoserine (S140). Residues 151–252 (DVSRLDLRIG…NGSVPGDRIT (102 aa)) enclose the tRNA-binding domain. K269 bears the N6-succinyllysine mark.

In terms of assembly, homodimer. Part of the multisynthetase complex (MSC), a multisubunit complex that groups tRNA ligases for Arg (RARS1), Asp (DARS1), Gln (QARS1), Ile (IARS1), Leu (LARS1), Lys (KARS1), Met (MARS1) the bifunctional ligase for Glu and Pro (EPRS1) and the auxiliary subunits AIMP1/p43, AIMP2/p38 and EEF1E1/p18. Interacts (via N-terminus) with RARS1 (via N-terminus). Part of a complex composed of RARS1, QARS1 and AIMP1. Interacts (via C-terminus) with SMURF2. Interacts (via N-terminus) with HSP90B1/gp96 (via C-terminus). Interacts with PSMA7. Interacts with TARS3. Post-translationally, cleaved by caspase-7 in response to apoptosis to produce EMAP-II.

It localises to the nucleus. The protein localises to the cytoplasm. It is found in the cytosol. Its subcellular location is the secreted. The protein resides in the endoplasmic reticulum. It localises to the golgi apparatus. Functionally, non-catalytic component of the multisynthase complex. Stimulates the catalytic activity of cytoplasmic arginyl-tRNA synthase. Binds tRNA. Possesses inflammatory cytokine activity. Negatively regulates TGF-beta signaling through stabilization of SMURF2 by binding to SMURF2 and inhibiting its SMAD7-mediated degradation. Involved in glucose homeostasis through induction of glucagon secretion at low glucose levels. Promotes dermal fibroblast proliferation and wound repair. Regulates KDELR1-mediated retention of HSP90B1/gp96 in the endoplasmic reticulum. Plays a role in angiogenesis by inducing endothelial cell migration at low concentrations and endothelian cell apoptosis at high concentrations. Induces maturation of dendritic cells and monocyte cell adhesion. Modulates endothelial cell responses by degrading HIF-1A through interaction with PSMA7. The sequence is that of Aminoacyl tRNA synthase complex-interacting multifunctional protein 1 (AIMP1) from Homo sapiens (Human).